A 437-amino-acid polypeptide reads, in one-letter code: Phosphoglucosamine mutase (437 aa).

The active-site Phosphoserine intermediate is the serine 101. Mg(2+)-binding residues include serine 101, aspartate 234, aspartate 236, and aspartate 238. The residue at position 101 (serine 101) is a Phosphoserine.

Belongs to the phosphohexose mutase family. The cofactor is Mg(2+). Post-translationally, activated by phosphorylation.

The catalysed reaction is alpha-D-glucosamine 1-phosphate = D-glucosamine 6-phosphate. Functionally, catalyzes the conversion of glucosamine-6-phosphate to glucosamine-1-phosphate. The chain is Phosphoglucosamine mutase from Thermus thermophilus (strain ATCC BAA-163 / DSM 7039 / HB27).